We begin with the raw amino-acid sequence, 646 residues long: Serine/threonine-protein kinase PLK3 (646 aa).

The disordered stretch occupies residues Met1–Gly35. A compositionally biased stretch (low complexity) spans Pro10–Ala19. The segment covering Pro20 to Ser31 has biased composition (pro residues). The 253-residue stretch at Tyr62–Phe314 folds into the Protein kinase domain. ATP contacts are provided by residues Leu68–Cys76 and Lys91. Residue Asp185 is the Proton acceptor of the active site. The interval Gly381 to Ser417 is disordered. POLO box domains lie at Trp463–Gln541 and Leu562–Pro645.

Belongs to the protein kinase superfamily. Ser/Thr protein kinase family. CDC5/Polo subfamily. As to quaternary structure, interacts (via the POLO-box domain) with CIB1; leading to inhibit PLK3 kinase activity. Interacts with GOLGB1. Phosphorylated in an ATM-dependent manner following DNA damage. Phosphorylated as cells enter mitosis and dephosphorylated as cells exit mitosis. As to expression, transcripts are highly detected in placenta, lung, followed by skeletal muscle, heart, pancreas, ovaries and kidney and weakly detected in liver and brain. May have a short half-live. In cells of hematopoietic origin, strongly and exclusively detected in terminally differentiated macrophages. Transcript expression appears to be down-regulated in primary lung tumor.

The protein resides in the cytoplasm. Its subcellular location is the nucleus. It is found in the nucleolus. The protein localises to the golgi apparatus. It localises to the cytoskeleton. The protein resides in the microtubule organizing center. Its subcellular location is the centrosome. It catalyses the reaction L-seryl-[protein] + ATP = O-phospho-L-seryl-[protein] + ADP + H(+). It carries out the reaction L-threonyl-[protein] + ATP = O-phospho-L-threonyl-[protein] + ADP + H(+). In terms of biological role, serine/threonine-protein kinase involved in cell cycle regulation, response to stress and Golgi disassembly. Polo-like kinases act by binding and phosphorylating proteins that are already phosphorylated on a specific motif recognized by the POLO box domains. Phosphorylates ATF2, BCL2L1, CDC25A, CDC25C, CHEK2, HIF1A, JUN, p53/TP53, p73/TP73, PTEN, TOP2A and VRK1. Involved in cell cycle regulation: required for entry into S phase and cytokinesis. Phosphorylates BCL2L1, leading to regulate the G2 checkpoint and progression to cytokinesis during mitosis. Plays a key role in response to stress: rapidly activated upon stress stimulation, such as ionizing radiation, reactive oxygen species (ROS), hyperosmotic stress, UV irradiation and hypoxia. Involved in DNA damage response and G1/S transition checkpoint by phosphorylating CDC25A, p53/TP53 and p73/TP73. Phosphorylates p53/TP53 in response to reactive oxygen species (ROS), thereby promoting p53/TP53-mediated apoptosis. Phosphorylates CHEK2 in response to DNA damage, promoting the G2/M transition checkpoint. Phosphorylates the transcription factor p73/TP73 in response to DNA damage, leading to inhibit p73/TP73-mediated transcriptional activation and pro-apoptotic functions. Phosphorylates HIF1A and JUN is response to hypoxia. Phosphorylates ATF2 following hyperosmotic stress in corneal epithelium. Also involved in Golgi disassembly during the cell cycle: part of a MEK1/MAP2K1-dependent pathway that induces Golgi fragmentation during mitosis by mediating phosphorylation of VRK1. May participate in endomitotic cell cycle, a form of mitosis in which both karyokinesis and cytokinesis are interrupted and is a hallmark of megakaryocyte differentiation, via its interaction with CIB1. In Homo sapiens (Human), this protein is Serine/threonine-protein kinase PLK3 (PLK3).